A 793-amino-acid chain; its full sequence is Phenylalanine--tRNA ligase beta subunit (793 aa).

The tRNA-binding domain maps to 39–148 (AGQFTHVIVA…DEAPIGMDLR (110 aa)). A B5 domain is found at 401–477 (PGTVSFLFDT…RLYGYDKLQA (77 aa)). Mg(2+) contacts are provided by Asp455, Asp461, Glu464, and Glu465. One can recognise an FDX-ACB domain in the interval 698–792 (SKYPQIRRDL…LENEFSILLR (95 aa)).

This sequence belongs to the phenylalanyl-tRNA synthetase beta subunit family. Type 1 subfamily. In terms of assembly, tetramer of two alpha and two beta subunits. The cofactor is Mg(2+).

It localises to the cytoplasm. The catalysed reaction is tRNA(Phe) + L-phenylalanine + ATP = L-phenylalanyl-tRNA(Phe) + AMP + diphosphate + H(+). The sequence is that of Phenylalanine--tRNA ligase beta subunit from Legionella pneumophila (strain Paris).